Reading from the N-terminus, the 149-residue chain is Protein cornichon homolog 2 (149 aa).

The next 3 membrane-spanning stretches (helical) occupy residues 3 to 23 (IELILWLFSFASIMVLIGLTA), 59 to 79 (ALCASFLLTLHWFPFLVMAPV), and 117 to 137 (YFSLFIITIYRLVMTAVTLFI).

The protein belongs to the cornichon family.

It is found in the endoplasmic reticulum membrane. The protein resides in the golgi apparatus membrane. In terms of biological role, acts as a cargo receptor necessary for the transportation of secretory proteins from the endoplasmic reticulum (ER) in COPII-coated vesicles targeted to the Golgi apparatus. The sequence is that of Protein cornichon homolog 2 from Oryza sativa subsp. japonica (Rice).